Reading from the N-terminus, the 213-residue chain is Imidazole glycerol phosphate synthase subunit HisH 1 (213 aa).

Positions 4 to 213 constitute a Glutamine amidotransferase type-1 domain; the sequence is TVAVIDYGMG…QNFVAWDGRW (210 aa). The Nucleophile role is filled by Cys82. Catalysis depends on residues His191 and Glu193.

Heterodimer of HisH and HisF.

It localises to the cytoplasm. It catalyses the reaction 5-[(5-phospho-1-deoxy-D-ribulos-1-ylimino)methylamino]-1-(5-phospho-beta-D-ribosyl)imidazole-4-carboxamide + L-glutamine = D-erythro-1-(imidazol-4-yl)glycerol 3-phosphate + 5-amino-1-(5-phospho-beta-D-ribosyl)imidazole-4-carboxamide + L-glutamate + H(+). The enzyme catalyses L-glutamine + H2O = L-glutamate + NH4(+). Its pathway is amino-acid biosynthesis; L-histidine biosynthesis; L-histidine from 5-phospho-alpha-D-ribose 1-diphosphate: step 5/9. Functionally, IGPS catalyzes the conversion of PRFAR and glutamine to IGP, AICAR and glutamate. The HisH subunit provides the glutamine amidotransferase activity that produces the ammonia necessary to HisF for the synthesis of IGP and AICAR. The chain is Imidazole glycerol phosphate synthase subunit HisH 1 (hisH1) from Pseudomonas aeruginosa (strain ATCC 15692 / DSM 22644 / CIP 104116 / JCM 14847 / LMG 12228 / 1C / PRS 101 / PAO1).